Here is a 200-residue protein sequence, read N- to C-terminus: Lipopolysaccharide core heptose(II)-phosphate phosphatase (200 aa).

The first 25 residues, methionine 1–alanine 25, serve as a signal peptide directing secretion.

The protein belongs to the phosphoglycerate mutase family. Ais subfamily.

It localises to the periplasm. It participates in bacterial outer membrane biogenesis; lipopolysaccharide metabolism. In terms of biological role, catalyzes the dephosphorylation of heptose(II) of the outer membrane lipopolysaccharide core. In Escherichia coli O6:H1 (strain CFT073 / ATCC 700928 / UPEC), this protein is Lipopolysaccharide core heptose(II)-phosphate phosphatase.